A 442-amino-acid chain; its full sequence is Transposase InsG for insertion sequence element IS4 (442 aa).

This sequence belongs to the transposase 11 family.

In terms of biological role, involved in the transposition of the insertion sequence IS4. The protein is Transposase InsG for insertion sequence element IS4 (insG) of Escherichia coli (strain K12).